Consider the following 138-residue polypeptide: Protein FAM136A (138 aa).

The residue at position 2 (alanine 2) is an N-acetylalanine. 2 positions are modified to phosphothreonine: threonine 124 and threonine 126.

Belongs to the FAM136 family.

In Homo sapiens (Human), this protein is Protein FAM136A (FAM136A).